Consider the following 219-residue polypeptide: Vesicle-associated membrane protein 711 (219 aa).

N-acetylalanine is present on Ala-2. At 2-189 (AILYALVARG…RSNVWWRNCK (188 aa)) the chain is on the cytoplasmic side. A Longin domain is found at 7 to 111 (LVARGTVVLS…AMNEEFSRVL (105 aa)). Residues 126-186 (RINRIKGEMN…RRFRSNVWWR (61 aa)) form the v-SNARE coiled-coil homology domain. Residues 190–210 (LTVLLILLLLVIIYIAVAFLC) form a helical; Anchor for type IV membrane protein membrane-spanning segment. At 211–219 (HGPTLPSCI) the chain is on the vesicular side.

It belongs to the synaptobrevin family. In terms of tissue distribution, expressed in flowers, leaves, stems and roots.

Its subcellular location is the vacuole membrane. The protein resides in the prevacuolar compartment membrane. Functionally, involved in the targeting and/or fusion of transport vesicles to their target membrane. This Arabidopsis thaliana (Mouse-ear cress) protein is Vesicle-associated membrane protein 711.